Here is a 229-residue protein sequence, read N- to C-terminus: Cytidylate kinase (229 aa).

An ATP-binding site is contributed by Gly10–Thr18.

It belongs to the cytidylate kinase family. Type 1 subfamily.

Its subcellular location is the cytoplasm. The catalysed reaction is CMP + ATP = CDP + ADP. It carries out the reaction dCMP + ATP = dCDP + ADP. The sequence is that of Cytidylate kinase from Leptospira interrogans serogroup Icterohaemorrhagiae serovar Lai (strain 56601).